We begin with the raw amino-acid sequence, 53 residues long: U13-myrmicitoxin-Tb1a (53 aa).

Positions 1–23 are cleaved as a signal peptide; sequence MKLIYIFSLVAVIAVTMIPGIMG. A propeptide spanning residues 24–29 is cleaved from the precursor; the sequence is EAEAEG. Lys-52 bears the Lysine amide mark.

In terms of tissue distribution, expressed by the venom gland.

Its subcellular location is the secreted. Its function is as follows. In vivo, this neurotoxin paralyzes about 70% of blowflies (L.caesar) one hour after intrathoracic injection, when tested at high doses (45 nmol/g). This Tetramorium bicarinatum (Tramp ant) protein is U13-myrmicitoxin-Tb1a.